A 405-amino-acid chain; its full sequence is MADVKKVVLAYSGGLDTSVILKWLQDTYNCEVVTFTADLGQGEEVEPARAKAQALGVKEIYIDDLREEFVRDFVFPMFRANTVYEGEYLLGTSIARPLIAKRLIEIANETGADAISHGATGKGNDQVRFELGAYALKPGVKVIAPWREWDLLSREKLMDYAEKHAIPIERHGKKKSPYSMDANLLHISYEGGVLEDTWTEHEEDMWRWTKSPEAAPDTPTYIELTYRKGDIVAIDGKDMTPAQVLAELNRIGGENGIGRLDIVENRYVGMKSRGCYETPGGTIMLKAHRAIESITLDREVAHLKDELMPKYASLIYNGYWWSPERSMLQQMIDASQVNVNGVVRLKLYKGNVIVVGRKSDDSLFDANIATFEEDGGAYNQADAGGFIKLNALRMRIAAGKGRTQF.

Residues 10–18 (AYSGGLDTS) and Ala37 each bind ATP. L-citrulline-binding residues include Tyr88 and Ser93. Gly118 serves as a coordination point for ATP. Thr120, Asn124, and Asp125 together coordinate L-aspartate. Asn124 lines the L-citrulline pocket. The L-citrulline site is built by Arg128, Ser179, Ser188, Glu264, and Tyr276.

The protein belongs to the argininosuccinate synthase family. Type 1 subfamily. In terms of assembly, homotetramer.

It localises to the cytoplasm. It carries out the reaction L-citrulline + L-aspartate + ATP = 2-(N(omega)-L-arginino)succinate + AMP + diphosphate + H(+). It functions in the pathway amino-acid biosynthesis; L-arginine biosynthesis; L-arginine from L-ornithine and carbamoyl phosphate: step 2/3. The chain is Argininosuccinate synthase from Stutzerimonas stutzeri (strain A1501) (Pseudomonas stutzeri).